The following is a 340-amino-acid chain: Maltose epimerase (340 aa).

Arg79 serves as a coordination point for substrate. Residue His178 is the Proton donor of the active site. Asp247 is a substrate binding site. Glu305 functions as the Proton acceptor in the catalytic mechanism.

The protein belongs to the aldose epimerase family.

It catalyses the reaction alpha-maltose = beta-maltose. Its pathway is carbohydrate metabolism; hexose metabolism. In terms of biological role, catalyzes the interconversion of alpha and beta anomers of maltose. The sequence is that of Maltose epimerase from Levilactobacillus brevis (strain ATCC 367 / BCRC 12310 / CIP 105137 / JCM 1170 / LMG 11437 / NCIMB 947 / NCTC 947) (Lactobacillus brevis).